The following is a 441-amino-acid chain: 5-methylthioadenosine/S-adenosylhomocysteine deaminase (441 aa).

Positions 70 and 72 each coordinate Zn(2+). Substrate contacts are provided by Glu99 and His191. His218 is a binding site for Zn(2+). Positions 221 and 306 each coordinate substrate. Asp306 provides a ligand contact to Zn(2+).

It belongs to the metallo-dependent hydrolases superfamily. MTA/SAH deaminase family. Zn(2+) serves as cofactor.

The catalysed reaction is S-adenosyl-L-homocysteine + H2O + H(+) = S-inosyl-L-homocysteine + NH4(+). It catalyses the reaction S-methyl-5'-thioadenosine + H2O + H(+) = S-methyl-5'-thioinosine + NH4(+). Functionally, catalyzes the deamination of 5-methylthioadenosine and S-adenosyl-L-homocysteine into 5-methylthioinosine and S-inosyl-L-homocysteine, respectively. Is also able to deaminate adenosine. The polypeptide is 5-methylthioadenosine/S-adenosylhomocysteine deaminase (Lawsonia intracellularis (strain PHE/MN1-00)).